We begin with the raw amino-acid sequence, 509 residues long: uncharacterized protein (509 aa).

A run of 13 helical transmembrane segments spans residues 14-34, 117-137, 158-178, 188-208, 209-229, 240-260, 303-323, 324-344, 359-379, 399-419, 423-443, 458-478, and 484-504; these read SAFTILFAILILAVGLTWVIP, TIEAVDVMVFIFVLGGMIGVI, EFFIVFCVSVLMVLGGTTCGI, ILVPVFLALGYDAIVCVGAIF, LAASMGTAFSTINPFSVVIAS, IGFRALGLVLGATCVIAYLYW, LILTLFCISFPIMIWGVMVGG, WWFPQMAASFLAITIIIMFIS, ASELVGVSLIIGLARGVNLVL, MPGSVFILGQLVVFIFLGLIV, SGLAVLSMPIMAPLADSVGIP, MLFLAPTGLVLVTLQMLQIPF, and FVMPMIGCLLLIGSILLVVQV.

To E.coli YfcC. It to B.subtilis YcgA.

Its subcellular location is the cell membrane. This is an uncharacterized protein from Haemophilus influenzae (strain ATCC 51907 / DSM 11121 / KW20 / Rd).